A 145-amino-acid chain; its full sequence is Bacilliredoxin Acid345_1880 (145 aa).

It belongs to the bacilliredoxin family.

This Koribacter versatilis (strain Ellin345) protein is Bacilliredoxin Acid345_1880.